A 378-amino-acid polypeptide reads, in one-letter code: Putative F-box protein At4g17565 (378 aa).

The F-box domain occupies 16–63 (PKWSELCPDLLRSIFEQLSFTNLNRAKLVCRSWNSASRGCVPKRNQIP).

The sequence is that of Putative F-box protein At4g17565 from Arabidopsis thaliana (Mouse-ear cress).